The chain runs to 475 residues: Putative F-box protein At3g58960 (475 aa).

The region spanning 1–49 is the F-box domain; sequence MDRISSLSNDIISNIVSFLSAKDAAVASVLSKRWQNIYTIVPNLEFDNT.

The sequence is that of Putative F-box protein At3g58960 from Arabidopsis thaliana (Mouse-ear cress).